A 378-amino-acid polypeptide reads, in one-letter code: tRNA-specific 2-thiouridylase MnmA (378 aa).

Residues 9–16 (GVSGGVDS) and Met-35 contribute to the ATP site. Residues 94-96 (NPD) form an interaction with target base in tRNA region. Cys-99 acts as the Nucleophile in catalysis. An intrachain disulfide couples Cys-99 to Cys-195. Gly-123 contributes to the ATP binding site. Positions 145–147 (KDQ) are interaction with tRNA. Cys-195 (cysteine persulfide intermediate) is an active-site residue. Residues 307–308 (RY) form an interaction with tRNA region.

The protein belongs to the MnmA/TRMU family.

The protein localises to the cytoplasm. It catalyses the reaction S-sulfanyl-L-cysteinyl-[protein] + uridine(34) in tRNA + AH2 + ATP = 2-thiouridine(34) in tRNA + L-cysteinyl-[protein] + A + AMP + diphosphate + H(+). Catalyzes the 2-thiolation of uridine at the wobble position (U34) of tRNA, leading to the formation of s(2)U34. This chain is tRNA-specific 2-thiouridylase MnmA, found in Xanthomonas axonopodis pv. citri (strain 306).